A 295-amino-acid polypeptide reads, in one-letter code: HTH-type transcriptional regulator TfdS (295 aa).

In terms of domain architecture, HTH lysR-type spans Met1–Thr58. The H-T-H motif DNA-binding region spans Val18–His37.

This sequence belongs to the LysR transcriptional regulatory family.

It is found in the cytoplasm. In terms of biological role, involved in the regulation of 3-chlorocatechol degradation. Transcriptional regulator of tfdB expression. Acts as a repressor in the absence of its effector (either 2-cis-chlorodiene lactone or chloromaleylacetate) but acts as an activator when its effector is present. The chain is HTH-type transcriptional regulator TfdS (tfdS) from Cupriavidus pinatubonensis (strain JMP 134 / LMG 1197) (Cupriavidus necator (strain JMP 134)).